Reading from the N-terminus, the 205-residue chain is Small ribosomal subunit protein uS4 (205 aa).

Residues 1 to 16 (MSKRETTKYKIDRRMG) are compositionally biased toward basic and acidic residues. Positions 1 to 46 (MSKRETTKYKIDRRMGENIWGRPKSPVNRRDYGPGQHGQRRKGKLS) are disordered. The S4 RNA-binding domain occupies 94 to 157 (SRLDAVIYRA…KQLVLVLESV (64 aa)).

It belongs to the universal ribosomal protein uS4 family. As to quaternary structure, part of the 30S ribosomal subunit. Contacts protein S5. The interaction surface between S4 and S5 is involved in control of translational fidelity.

Functionally, one of the primary rRNA binding proteins, it binds directly to 16S rRNA where it nucleates assembly of the body of the 30S subunit. In terms of biological role, with S5 and S12 plays an important role in translational accuracy. The polypeptide is Small ribosomal subunit protein uS4 (Bartonella henselae (strain ATCC 49882 / DSM 28221 / CCUG 30454 / Houston 1) (Rochalimaea henselae)).